The following is a 131-amino-acid chain: D-ribose pyranase (131 aa).

H20 serves as the catalytic Proton donor. Residues D28, H98, and 120–122 (YSN) each bind substrate.

The protein belongs to the RbsD / FucU family. RbsD subfamily. Homodecamer.

The protein localises to the cytoplasm. It catalyses the reaction beta-D-ribopyranose = beta-D-ribofuranose. The protein operates within carbohydrate metabolism; D-ribose degradation; D-ribose 5-phosphate from beta-D-ribopyranose: step 1/2. Its function is as follows. Catalyzes the interconversion of beta-pyran and beta-furan forms of D-ribose. This Limosilactobacillus reuteri (strain DSM 20016) (Lactobacillus reuteri) protein is D-ribose pyranase.